Reading from the N-terminus, the 62-residue chain is Inner membrane protein p12 (62 aa).

A helical transmembrane segment spans residues 16 to 36; it reads LLIVAIIVVIMAIMLYYFWWM.

The protein belongs to the asfivirus inner membrane protein p12 family. As to quaternary structure, homomultimer; disulfide-linked. Not glycosylated.

It is found in the virion membrane. This chain is Inner membrane protein p12, found in African swine fever virus (isolate Tick/Malawi/Lil 20-1/1983) (ASFV).